The sequence spans 359 residues: Fructose-bisphosphate aldolase class 2 (359 aa).

Serine 62 contacts D-glyceraldehyde 3-phosphate. The active-site Proton donor is the aspartate 110. Histidine 111, aspartate 145, glutamate 175, and histidine 227 together coordinate Zn(2+). Glycine 228 serves as a coordination point for dihydroxyacetone phosphate. Histidine 265 is a Zn(2+) binding site. Dihydroxyacetone phosphate-binding positions include 266–268 (GGS) and 287–290 (NIDT).

This sequence belongs to the class II fructose-bisphosphate aldolase family. Zn(2+) is required as a cofactor.

The catalysed reaction is beta-D-fructose 1,6-bisphosphate = D-glyceraldehyde 3-phosphate + dihydroxyacetone phosphate. Its pathway is carbohydrate degradation; glycolysis; D-glyceraldehyde 3-phosphate and glycerone phosphate from D-glucose: step 4/4. Catalyzes the aldol condensation of dihydroxyacetone phosphate (DHAP or glycerone-phosphate) with glyceraldehyde 3-phosphate (G3P) to form fructose 1,6-bisphosphate (FBP) in gluconeogenesis and the reverse reaction in glycolysis. The protein is Fructose-bisphosphate aldolase class 2 (fbaA) of Buchnera aphidicola subsp. Baizongia pistaciae (strain Bp).